Consider the following 777-residue polypeptide: Serine/threonine-protein kinase PLK4 (777 aa).

The Protein kinase domain occupies 14 to 268 (YEVQHLLGKG…LEQVLRHPFL (255 aa)). ATP is bound by residues 20 to 28 (LGKGGFASV) and Lys43. Catalysis depends on Asp139, which acts as the Proton acceptor. Residues 371–381 (TNNLAPFTSDS) are compositionally biased toward polar residues. Residues 371 to 390 (TNNLAPFTSDSDMIPSPVGE) are disordered. The 118-residue stretch at 390–507 (EKRLLMPPLE…ARFVGLVKSK (118 aa)) folds into the Cryptic POLO box 1 (CPB1) domain. The Cryptic POLO box 2 (CPB2) domain occupies 508–611 (TPKITFFSSL…GRRPAADMHA (104 aa)). One can recognise a POLO box domain in the interval 669-748 (PIKRITVPEI…MPQLQMKLKC (80 aa)).

Belongs to the protein kinase superfamily. Ser/Thr protein kinase family. CDC5/Polo subfamily. Homodimer. Post-translationally, ubiquitinated by the SCF(Slimb) ubiquitin ligase complex; leading to its degradation by the proteasome during interphase and regulating centriole number and ensuring the block to centriole reduplication.

It localises to the cytoplasm. The protein localises to the cytoskeleton. Its subcellular location is the microtubule organizing center. It is found in the centrosome. The protein resides in the centriole. The catalysed reaction is L-seryl-[protein] + ATP = O-phospho-L-seryl-[protein] + ADP + H(+). It catalyses the reaction L-threonyl-[protein] + ATP = O-phospho-L-threonyl-[protein] + ADP + H(+). Its function is as follows. Serine/threonine-protein kinase that plays a central role in centriole duplication. Able to trigger procentriole formation on the surface of the mother centriole cylinder, using mother centriole as a platform, leading to the recruitment of centriole biogenesis proteins such as sas-6. When overexpressed, it is able to induce centrosome amplification through the simultaneous generation of multiple procentrioles adjoining each parental centriole during S phase. Centrosome amplification following overexpression can initiate tumorigenesis, highlighting the importance of centrosome regulation in cancers. This Drosophila pseudoobscura pseudoobscura (Fruit fly) protein is Serine/threonine-protein kinase PLK4 (SAK).